A 100-amino-acid polypeptide reads, in one-letter code: uncharacterized protein (100 aa).

Belongs to the ycf15 family.

It localises to the plastid. The protein resides in the chloroplast. This is an uncharacterized protein from Panax ginseng (Korean ginseng).